We begin with the raw amino-acid sequence, 200 residues long: LHFPL tetraspan subfamily member 6 protein (200 aa).

The first 21 residues, 1–21 (MASSLTCTGVIWALLSFLCAA), serve as a signal peptide directing secretion. A run of 3 helical transmembrane segments spans residues 84 to 104 (ICTI…LTAL), 123 to 143 (GIQF…PLGW), and 166 to 186 (IGWA…LCTW).

Belongs to the LHFP family. As to expression, pancreas, kidney, skeletal muscle, liver, lung brain, heart, colon, small intestine, uterus, testis, prostate, thymus, spleen and placenta.

Its subcellular location is the membrane. This chain is LHFPL tetraspan subfamily member 6 protein, found in Homo sapiens (Human).